The following is a 470-amino-acid chain: Putative multidrug resistance protein MdtD (470 aa).

At 1–11 (MTELPDNTRWQ) the chain is on the periplasmic side. The chain crosses the membrane as a helical span at residues 12-32 (LWIVAFGFFMQSLDTTIVNTA). Topologically, residues 33 to 48 (LPSMAKSLGESPLHMH) are cytoplasmic. Residues 49–69 (MVVVSYVLTVAVMLPASGWLA) traverse the membrane as a helical segment. At 70–76 (DKIGVRN) the chain is on the periplasmic side. The chain crosses the membrane as a helical span at residues 77–97 (IFFAAIVLFTLGSLFCALSGT). Residues 98–101 (LNQL) lie on the Cytoplasmic side of the membrane. The chain crosses the membrane as a helical span at residues 102–124 (VLARVLQGVGGAMMVPVGRLTVM). Over 125–137 (KIVPRAQYMAAMT) the chain is Periplasmic. Residues 138-158 (FVTLPGQIGPLLGPALGGVLV) form a helical membrane-spanning segment. Residues 159-164 (EYASWH) are Cytoplasmic-facing. The helical transmembrane segment at 165 to 185 (WIFLINIPVGIVGAMATFMLM) threads the bilayer. The Periplasmic portion of the chain corresponds to 186-196 (PNYTIETRRFD). Residues 197–217 (LPGFLLLAIGMAVLTLALDGS) form a helical membrane-spanning segment. Residues 218–224 (KSMGISP) lie on the Cytoplasmic side of the membrane. A helical membrane pass occupies residues 225–245 (WTLAGLAAGGAAAILLYLFHA). At 246 to 262 (KKSSGALFSLRLFRTPT) the chain is on the periplasmic side. Residues 263 to 283 (FSLGLLGSFAGRIGSGMLPFM) form a helical membrane-spanning segment. Residues 284-285 (TP) lie on the Cytoplasmic side of the membrane. Residues 286-306 (VFLQIGLGFSPFHAGLMMIPM) form a helical membrane-spanning segment. Residues 307 to 341 (VLGSMGMKRIVVQIVNRFGYRRVLVATTLGLALVS) are Periplasmic-facing. Residues 342–362 (LLFMSVALLGWYYLLPLVLLL) form a helical membrane-spanning segment. Residues 363–395 (QGMVNSARFSSMNTLTLKDLPDTLASSGNSLLS) are Cytoplasmic-facing. The chain crosses the membrane as a helical span at residues 396–416 (MIMQLSMSIGVTIAGMLLGMF). The Periplasmic portion of the chain corresponds to 417-430 (GQQHIGIDSSATHH). The chain crosses the membrane as a helical span at residues 431–451 (VFMYTWLCMAVIIALPAIIFA). Over 452–470 (RVPNDTQQNMVISRRKRSL) the chain is Cytoplasmic.

This sequence belongs to the major facilitator superfamily. TCR/Tet family.

It is found in the cell inner membrane. The protein is Putative multidrug resistance protein MdtD of Salmonella paratyphi A (strain ATCC 9150 / SARB42).